The primary structure comprises 110 residues: Large ribosomal subunit protein uL22 (110 aa).

The protein belongs to the universal ribosomal protein uL22 family. In terms of assembly, part of the 50S ribosomal subunit.

This protein binds specifically to 23S rRNA; its binding is stimulated by other ribosomal proteins, e.g. L4, L17, and L20. It is important during the early stages of 50S assembly. It makes multiple contacts with different domains of the 23S rRNA in the assembled 50S subunit and ribosome. In terms of biological role, the globular domain of the protein is located near the polypeptide exit tunnel on the outside of the subunit, while an extended beta-hairpin is found that lines the wall of the exit tunnel in the center of the 70S ribosome. The polypeptide is Large ribosomal subunit protein uL22 (Pseudoalteromonas atlantica (strain T6c / ATCC BAA-1087)).